A 343-amino-acid polypeptide reads, in one-letter code: Flavonoid 3'-O-methyltransferase FOMT (343 aa).

S-adenosyl-L-homocysteine-binding residues include G184, D207, D227, M228, M240, and K241. H245 acts as the Proton acceptor in catalysis. Active-site residues include E273 and E305.

The protein belongs to the class I-like SAM-binding methyltransferase superfamily. Cation-independent O-methyltransferase family. As to quaternary structure, homodimer.

It catalyses the reaction 3',5-dihydroxy-3,4',7-trimethoxyflavone + S-adenosyl-L-methionine = 5-hydroxy-3,7,3',4'-tetramethoxyflavone + S-adenosyl-L-homocysteine + H(+). The protein operates within flavonoid metabolism. Inhibited by nickel (NiCl(2) and NiSO(4)) and para-chloromercuribenzoate. Functionally, catalyzes the 3'- or 5'-O-methylation of partially methylated flavonols, but does not accept quercetin or caffeate as substrates for methylation. The polypeptide is Flavonoid 3'-O-methyltransferase FOMT (Chrysosplenium americanum (American golden saxifrage)).